The chain runs to 596 residues: Elongation factor 4 (596 aa).

Positions 2–184 (KQIRNFSIIA…VIVAKIPPPE (183 aa)) constitute a tr-type G domain. Residues 14-19 (DHGKST) and 131-134 (NKID) each bind GTP.

This sequence belongs to the TRAFAC class translation factor GTPase superfamily. Classic translation factor GTPase family. LepA subfamily.

It is found in the cell inner membrane. It catalyses the reaction GTP + H2O = GDP + phosphate + H(+). In terms of biological role, required for accurate and efficient protein synthesis under certain stress conditions. May act as a fidelity factor of the translation reaction, by catalyzing a one-codon backward translocation of tRNAs on improperly translocated ribosomes. Back-translocation proceeds from a post-translocation (POST) complex to a pre-translocation (PRE) complex, thus giving elongation factor G a second chance to translocate the tRNAs correctly. Binds to ribosomes in a GTP-dependent manner. The polypeptide is Elongation factor 4 (Shewanella baltica (strain OS155 / ATCC BAA-1091)).